The primary structure comprises 273 residues: Non-homologous end joining protein Ku (273 aa).

Residues 10 to 193 enclose the Ku domain; it reads AFGLVNVPVK…KVEIKPAELK (184 aa). Residues 111–273 form a sufficient for interaction with LigD region; the sequence is FLEPDSKSSK…KANSNVPTPP (163 aa).

Belongs to the prokaryotic Ku family. Homodimer. Interacts with LigD.

With LigD forms a non-homologous end joining (NHEJ) DNA repair enzyme, which repairs dsDNA breaks with reduced fidelity. Binds linear dsDNA with 5'- and 3'- overhangs but not closed circular dsDNA nor ssDNA. Recruits and stimulates the ligase activity of LigD. This chain is Non-homologous end joining protein Ku (mku), found in Mycobacterium tuberculosis (strain CDC 1551 / Oshkosh).